The primary structure comprises 324 residues: Inhibitor of growth protein 1 homolog (324 aa).

The segment at 120 to 237 (AEEEKKKKKS…SSRKQKSMAA (118 aa)) is disordered. The span at 140–169 (SSTTSSSSSSSSSSLSLSSSTNNTSSLNSS) shows a compositional bias: low complexity. Residues 170–186 (SGGGGGGSGGGGGGGGH) show a composition bias toward gly residues. Low complexity predominate over residues 201 to 229 (SLTSSSSSGNINGMSSSSSSSSSSSSLSS). Residues 271 to 320 (PTYCFCNRVSFGEMVGCENPDCKIEWFHFECVGLTSTPKGKWYCPDCTRI) form a PHD-type zinc finger. Residues Cys-274, Cys-276, Cys-287, Cys-292, His-298, Cys-301, Cys-314, and Cys-317 each coordinate Zn(2+).

This sequence belongs to the ING family. As to quaternary structure, interacts with H3K4me3 and to a lesser extent with H3K4me2.

Its subcellular location is the nucleus. Its function is as follows. Involved in regulation of the growth and differentiation transition (GDT) process, probably by regulating gene expression via histone modification. The protein is Inhibitor of growth protein 1 homolog of Dictyostelium discoideum (Social amoeba).